The primary structure comprises 379 residues: DnaJ homolog subfamily B member 14 (379 aa).

Residues 1-244 (MEGNRDEAEK…GHEREEERAD (244 aa)) lie on the Cytoplasmic side of the membrane. Residues 56–90 (TAGSSTHCRKPPGSSDQSKPSCGKDGTSGAGEGGK) are disordered. In terms of domain architecture, J spans 108–172 (NYYEVLGVTK…EKRKQYDLTG (65 aa)). A helical membrane pass occupies residues 245–265 (GGFSVFIQLMPIIVLILVSLL). At 266 to 379 (SQLMVSNPPY…ERLTSLYKGG (114 aa)) the chain is on the lumenal side.

It belongs to the DnaJ family. DNAJB12/DNAJB14 subfamily. In terms of assembly, interacts (via J domain) with HSPA8/Hsc70. Forms a multiprotein complex, at least composed of DNAJB12, DNAJB14, HSPA8/Hsc70 and SGTA; interaction with DNAJB14 and HSPA8/Hsc70 is direct.

The protein localises to the endoplasmic reticulum membrane. It is found in the nucleus membrane. Acts as a co-chaperone with HSPA8/Hsc70; required to promote protein folding and trafficking, prevent aggregation of client proteins, and promote unfolded proteins to endoplasmic reticulum-associated degradation (ERAD) pathway. Acts by determining HSPA8/Hsc70's ATPase and polypeptide-binding activities. Can also act independently of HSPA8/Hsc70: together with DNAJB12, acts as a chaperone that promotes maturation of potassium channels KCND2 and KCNH2 by stabilizing nascent channel subunits and assembling them into tetramers. While stabilization of nascent channel proteins is dependent on HSPA8/Hsc70, the process of oligomerization of channel subunits is independent of HSPA8/Hsc70. When overexpressed, forms membranous structures together with DNAJB12 and HSPA8/Hsc70 within the nucleus; the role of these structures, named DJANGOs, is still unclear. This Mus musculus (Mouse) protein is DnaJ homolog subfamily B member 14.